We begin with the raw amino-acid sequence, 227 residues long: Enolase-phosphatase E1 (227 aa).

This sequence belongs to the HAD-like hydrolase superfamily. MasA/MtnC family. In terms of assembly, monomer. Mg(2+) serves as cofactor.

It catalyses the reaction 5-methylsulfanyl-2,3-dioxopentyl phosphate + H2O = 1,2-dihydroxy-5-(methylsulfanyl)pent-1-en-3-one + phosphate. Its pathway is amino-acid biosynthesis; L-methionine biosynthesis via salvage pathway; L-methionine from S-methyl-5-thio-alpha-D-ribose 1-phosphate: step 3/6. It participates in amino-acid biosynthesis; L-methionine biosynthesis via salvage pathway; L-methionine from S-methyl-5-thio-alpha-D-ribose 1-phosphate: step 4/6. Functionally, bifunctional enzyme that catalyzes the enolization of 2,3-diketo-5-methylthiopentyl-1-phosphate (DK-MTP-1-P) into the intermediate 2-hydroxy-3-keto-5-methylthiopentenyl-1-phosphate (HK-MTPenyl-1-P), which is then dephosphorylated to form the acireductone 1,2-dihydroxy-3-keto-5-methylthiopentene (DHK-MTPene). The polypeptide is Enolase-phosphatase E1 (Pseudomonas syringae pv. tomato (strain ATCC BAA-871 / DC3000)).